A 359-amino-acid chain; its full sequence is Phosphoribosylformylglycinamidine cyclo-ligase (359 aa).

It belongs to the AIR synthase family.

It localises to the cytoplasm. The catalysed reaction is 2-formamido-N(1)-(5-O-phospho-beta-D-ribosyl)acetamidine + ATP = 5-amino-1-(5-phospho-beta-D-ribosyl)imidazole + ADP + phosphate + H(+). Its pathway is purine metabolism; IMP biosynthesis via de novo pathway; 5-amino-1-(5-phospho-D-ribosyl)imidazole from N(2)-formyl-N(1)-(5-phospho-D-ribosyl)glycinamide: step 2/2. This is Phosphoribosylformylglycinamidine cyclo-ligase from Brucella melitensis biotype 2 (strain ATCC 23457).